Here is a 189-residue protein sequence, read N- to C-terminus: Bilin-binding protein (189 aa).

The N-terminal stretch at Met1–Ala15 is a signal peptide. Intrachain disulfides connect Cys23–Cys130 and Cys57–Cys185.

The protein belongs to the calycin superfamily. Lipocalin family. In terms of assembly, homotetramer. As to expression, hemolymph.

The protein localises to the secreted. This protein binds the blue pigments bilins. The protein is Bilin-binding protein of Pieris brassicae (White butterfly).